Consider the following 355-residue polypeptide: UDP-N-acetylglucosamine--N-acetylmuramyl-(pentapeptide) pyrophosphoryl-undecaprenol N-acetylglucosamine transferase (355 aa).

UDP-N-acetyl-alpha-D-glucosamine-binding positions include 15–17, Asn-127, Arg-163, Ser-191, Ile-244, 263–268, and Gln-288; these read TGG and ALTVSE.

This sequence belongs to the glycosyltransferase 28 family. MurG subfamily.

Its subcellular location is the cell inner membrane. The enzyme catalyses di-trans,octa-cis-undecaprenyl diphospho-N-acetyl-alpha-D-muramoyl-L-alanyl-D-glutamyl-meso-2,6-diaminopimeloyl-D-alanyl-D-alanine + UDP-N-acetyl-alpha-D-glucosamine = di-trans,octa-cis-undecaprenyl diphospho-[N-acetyl-alpha-D-glucosaminyl-(1-&gt;4)]-N-acetyl-alpha-D-muramoyl-L-alanyl-D-glutamyl-meso-2,6-diaminopimeloyl-D-alanyl-D-alanine + UDP + H(+). Its pathway is cell wall biogenesis; peptidoglycan biosynthesis. In terms of biological role, cell wall formation. Catalyzes the transfer of a GlcNAc subunit on undecaprenyl-pyrophosphoryl-MurNAc-pentapeptide (lipid intermediate I) to form undecaprenyl-pyrophosphoryl-MurNAc-(pentapeptide)GlcNAc (lipid intermediate II). This is UDP-N-acetylglucosamine--N-acetylmuramyl-(pentapeptide) pyrophosphoryl-undecaprenol N-acetylglucosamine transferase from Citrobacter koseri (strain ATCC BAA-895 / CDC 4225-83 / SGSC4696).